The following is a 271-amino-acid chain: Protein FAM110D (271 aa).

Residues 1 to 13 show a composition bias toward polar residues; that stretch reads MLLSSPTTPSRGR. 3 disordered regions span residues 1-84, 118-149, and 186-242; these read MLLS…PDSL, DAAPSSPAPTERPGAPAGWAGSPDTPEATGKR, and PQSW…GRPT.

It belongs to the FAM110 family.

This is Protein FAM110D from Mus musculus (Mouse).